A 164-amino-acid chain; its full sequence is Small ribosomal subunit protein uS5 (164 aa).

The 64-residue stretch at 10-73 (IEERVVAINR…ESAKKNMIEV (64 aa)) folds into the S5 DRBM domain.

This sequence belongs to the universal ribosomal protein uS5 family. As to quaternary structure, part of the 30S ribosomal subunit. Contacts proteins S4 and S8.

With S4 and S12 plays an important role in translational accuracy. Its function is as follows. Located at the back of the 30S subunit body where it stabilizes the conformation of the head with respect to the body. The chain is Small ribosomal subunit protein uS5 from Streptococcus suis (strain 98HAH33).